A 688-amino-acid chain; its full sequence is Glycine--tRNA ligase beta subunit (688 aa).

It belongs to the class-II aminoacyl-tRNA synthetase family. Tetramer of two alpha and two beta subunits.

The protein resides in the cytoplasm. It carries out the reaction tRNA(Gly) + glycine + ATP = glycyl-tRNA(Gly) + AMP + diphosphate. This is Glycine--tRNA ligase beta subunit from Chromohalobacter salexigens (strain ATCC BAA-138 / DSM 3043 / CIP 106854 / NCIMB 13768 / 1H11).